Consider the following 431-residue polypeptide: Serine--tRNA ligase (431 aa).

The interval 41–66 (QSRTQELQAERNARSKSIGEAARRGE) is disordered. L-serine is bound at residue 240-242 (TSE). 271–273 (RSE) lines the ATP pocket. Glu-294 is an L-serine binding site. Residue 358–361 (EISS) participates in ATP binding. Residue Ser-392 participates in L-serine binding.

It belongs to the class-II aminoacyl-tRNA synthetase family. Type-1 seryl-tRNA synthetase subfamily. In terms of assembly, homodimer. The tRNA molecule binds across the dimer.

The protein localises to the cytoplasm. It carries out the reaction tRNA(Ser) + L-serine + ATP = L-seryl-tRNA(Ser) + AMP + diphosphate + H(+). It catalyses the reaction tRNA(Sec) + L-serine + ATP = L-seryl-tRNA(Sec) + AMP + diphosphate + H(+). Its pathway is aminoacyl-tRNA biosynthesis; selenocysteinyl-tRNA(Sec) biosynthesis; L-seryl-tRNA(Sec) from L-serine and tRNA(Sec): step 1/1. Functionally, catalyzes the attachment of serine to tRNA(Ser). Is also able to aminoacylate tRNA(Sec) with serine, to form the misacylated tRNA L-seryl-tRNA(Sec), which will be further converted into selenocysteinyl-tRNA(Sec). The chain is Serine--tRNA ligase from Aeromonas hydrophila subsp. hydrophila (strain ATCC 7966 / DSM 30187 / BCRC 13018 / CCUG 14551 / JCM 1027 / KCTC 2358 / NCIMB 9240 / NCTC 8049).